The following is a 311-amino-acid chain: Methionyl-tRNA formyltransferase (311 aa).

110–113 is a binding site for (6S)-5,6,7,8-tetrahydrofolate; it reads SLLP.

This sequence belongs to the Fmt family.

It catalyses the reaction L-methionyl-tRNA(fMet) + (6R)-10-formyltetrahydrofolate = N-formyl-L-methionyl-tRNA(fMet) + (6S)-5,6,7,8-tetrahydrofolate + H(+). Functionally, attaches a formyl group to the free amino group of methionyl-tRNA(fMet). The formyl group appears to play a dual role in the initiator identity of N-formylmethionyl-tRNA by promoting its recognition by IF2 and preventing the misappropriation of this tRNA by the elongation apparatus. The sequence is that of Methionyl-tRNA formyltransferase from Acidobacterium capsulatum (strain ATCC 51196 / DSM 11244 / BCRC 80197 / JCM 7670 / NBRC 15755 / NCIMB 13165 / 161).